A 440-amino-acid polypeptide reads, in one-letter code: Chaperone SurA (440 aa).

The first 25 residues, 1 to 25 (MGTKLSSRSPFSLPFLTLLAGMAIA), serve as a signal peptide directing secretion. 2 PpiC domains span residues 182 to 283 (SDEY…KLVE) and 294 to 392 (IDQT…QVIE).

The protein resides in the periplasm. It carries out the reaction [protein]-peptidylproline (omega=180) = [protein]-peptidylproline (omega=0). In terms of biological role, chaperone involved in the correct folding and assembly of outer membrane proteins. Recognizes specific patterns of aromatic residues and the orientation of their side chains, which are found more frequently in integral outer membrane proteins. May act in both early periplasmic and late outer membrane-associated steps of protein maturation. The polypeptide is Chaperone SurA (Nitrosospira multiformis (strain ATCC 25196 / NCIMB 11849 / C 71)).